Here is a 255-residue protein sequence, read N- to C-terminus: Phosphatidylglycerol--prolipoprotein diacylglyceryl transferase (255 aa).

The next 3 membrane-spanning stretches (helical) occupy residues 15–35 (WYGIMIALGVLAALILANLNC), 46–66 (IDVFLISFPLAIIGARVYYVV), and 84–104 (LGGLAIHGGIIFGLGAAYIVS). Arg130 lines the a 1,2-diacyl-sn-glycero-3-phospho-(1'-sn-glycerol) pocket. The next 3 membrane-spanning stretches (helical) occupy residues 169 to 189 (PTFLYESLWDLIVCIILVYIF), 196 to 216 (GTVICTYVGLYSLGRFFIEGL), and 228 to 248 (VAQLVSFIGIVLSISFFVYLK).

This sequence belongs to the Lgt family.

Its subcellular location is the cell membrane. The enzyme catalyses L-cysteinyl-[prolipoprotein] + a 1,2-diacyl-sn-glycero-3-phospho-(1'-sn-glycerol) = an S-1,2-diacyl-sn-glyceryl-L-cysteinyl-[prolipoprotein] + sn-glycerol 1-phosphate + H(+). It participates in protein modification; lipoprotein biosynthesis (diacylglyceryl transfer). In terms of biological role, catalyzes the transfer of the diacylglyceryl group from phosphatidylglycerol to the sulfhydryl group of the N-terminal cysteine of a prolipoprotein, the first step in the formation of mature lipoproteins. This chain is Phosphatidylglycerol--prolipoprotein diacylglyceryl transferase, found in Clostridium kluyveri (strain NBRC 12016).